The chain runs to 105 residues: UPF0235 protein RrIowa_1526 (105 aa).

It belongs to the UPF0235 family.

The sequence is that of UPF0235 protein RrIowa_1526 from Rickettsia rickettsii (strain Iowa).